The primary structure comprises 412 residues: Histone-lysine N-methyltransferase SUV39H1 (412 aa).

The interaction with SIRT1 stretch occupies residues 1–89 (MAENLKGCSV…LKCVRILKQF (89 aa)). In terms of domain architecture, Chromo spans 43–101 (FEVEYLCDYKKIREQEYYLVKWRGYPDSESTWEPRQNLKCVRILKQFHKDLERELLRRH). Positions 179 to 240 (VGCECQDCLW…DCPNRVVQKG (62 aa)) constitute a Pre-SET domain. C181, C183, C186, C194, C195, C222, C226, C228, and C232 together coordinate Zn(2+). Positions 243-366 (YDLCIFRTDD…AGEELTFDYN (124 aa)) constitute an SET domain. An S-adenosyl-L-methionine-binding site is contributed by 254–256 (RGW). Residues 255–377 (GWGVRTLEKI…QVDPVDMEST (123 aa)) are mediates interaction with MECOM. K266 bears the N6-acetyllysine mark. Residues Y297 and 323-324 (NH) each bind S-adenosyl-L-methionine. C326 contributes to the Zn(2+) binding site. Residue S391 is modified to Phosphoserine. Positions 396-412 (VRIECKCGTESCRKYLF) constitute a Post-SET domain. Zn(2+) is bound by residues C400, C402, and C407.

Belongs to the class V-like SAM-binding methyltransferase superfamily. Histone-lysine methyltransferase family. Suvar3-9 subfamily. As to quaternary structure, interacts with H3 and H4 histones. Interacts with GFI1B, DNMT3B, CBX1, CBX4, CCAR2, MBD1, RUNX1, RUNX3, MYOD1, SMAD5 and RB1. Interacts with SBF1 through the SET domain. Interacts with HDAC1 and HDAC2 through the N-terminus and associates with the core histone deacetylase complex composed of HDAC1, HDAC2, RBBP4 and RBBP7. Component of the eNoSC complex, composed of SIRT1, SUV39H1 and RRP8. Interacts (via SET domain) with MECOM; enhances MECOM transcriptional repression activity. Interacts with LMNA; the interaction increases stability of SUV39H1. The large PER complex involved in the histone methylation is composed of at least PER2, CBX3, TRIM28, SUV39H1 and/or SUV39H2; CBX3 mediates the formation of the complex. (Microbial infection) Interacts with HTLV-1 Tax protein, leading to abrogate Tax transactivation of HTLV-1 LTR. In terms of processing, phosphorylated on serine residues, and to a lesser degree, on threonine residues. The phosphorylated form is stabilized by SBF1 and is less active in its transcriptional repressor function. Ubiquitinated by the DCX(DCAF13) E3 ubiquitin ligase complex, leading to its degradation. Post-translationally, acetylated at Lys-266, leading to inhibition of enzyme activity. SIRT1-mediated deacetylation relieves this inhibition. In terms of processing, (Microbial infection) A higher molecular weight form is also seen in M.bovis infected cells.

It localises to the nucleus. Its subcellular location is the nucleus lamina. The protein resides in the nucleoplasm. The protein localises to the chromosome. It is found in the centromere. It localises to the cytoplasmic vesicle. Its subcellular location is the phagosome lumen. The protein resides in the cell membrane. The catalysed reaction is L-lysyl(9)-[histone H3] + 3 S-adenosyl-L-methionine = N(6),N(6),N(6)-trimethyl-L-lysyl(9)-[histone H3] + 3 S-adenosyl-L-homocysteine + 3 H(+). Its activity is regulated as follows. Inhibited by S-adenosyl-L-homocysteine. Negatively regulated by CCAR2. Histone methyltransferase that specifically trimethylates 'Lys-9' of histone H3 using monomethylated H3 'Lys-9' as substrate. Also weakly methylates histone H1 (in vitro). H3 'Lys-9' trimethylation represents a specific tag for epigenetic transcriptional repression by recruiting HP1 (CBX1, CBX3 and/or CBX5) proteins to methylated histones. Mainly functions in heterochromatin regions, thereby playing a central role in the establishment of constitutive heterochromatin at pericentric and telomere regions. H3 'Lys-9' trimethylation is also required to direct DNA methylation at pericentric repeats. SUV39H1 is targeted to histone H3 via its interaction with RB1 and is involved in many processes, such as repression of MYOD1-stimulated differentiation, regulation of the control switch for exiting the cell cycle and entering differentiation, repression by the PML-RARA fusion protein, BMP-induced repression, repression of switch recombination to IgA and regulation of telomere length. Component of the eNoSC (energy-dependent nucleolar silencing) complex, a complex that mediates silencing of rDNA in response to intracellular energy status and acts by recruiting histone-modifying enzymes. The eNoSC complex is able to sense the energy status of cell: upon glucose starvation, elevation of NAD(+)/NADP(+) ratio activates SIRT1, leading to histone H3 deacetylation followed by dimethylation of H3 at 'Lys-9' (H3K9me2) by SUV39H1 and the formation of silent chromatin in the rDNA locus. Recruited by the large PER complex to the E-box elements of the circadian target genes such as PER2 itself or PER1, contributes to the conversion of local chromatin to a heterochromatin-like repressive state through H3 'Lys-9' trimethylation. Functionally, (Microbial infection) Plays a role in defense against mycobacterial infections. Methylates M.tuberculosis HupB on 'Lys-140', probably methylates HupB of M.bovis also. Methylation has an inhibitory effect on mycobacterial growth in the host. Macrophages expressing about 60% SUV39H1 are slightly more susceptible to M.bovis or M.tuberculosis infection. Chaetocin (an inhibitor of this enzyme) increases macrophage survival of M.tuberculosis. This protein inhibits biofilm formation by M.tuberculosis via 'Lys-140' trimethylation. This is Histone-lysine N-methyltransferase SUV39H1 (SUV39H1) from Homo sapiens (Human).